We begin with the raw amino-acid sequence, 156 residues long: Large ribosomal subunit protein eL24 (156 aa).

The segment covering 110–129 has biased composition (basic and acidic residues); that stretch reads KESKAKKQETQAAKKAEKAK. Residues 110-156 form a disordered region; sequence KESKAKKQETQAAKKAEKAKNAANPKARVTSKQGAKGAPVKVAAKSR. A compositionally biased stretch (low complexity) spans 130–156; that stretch reads NAANPKARVTSKQGAKGAPVKVAAKSR.

Belongs to the eukaryotic ribosomal protein eL24 family. In terms of assembly, component of the large ribosomal subunit (LSU). Mature N.crassa ribosomes consist of a small (40S) and a large (60S) subunit. The 40S small subunit contains 1 molecule of ribosomal RNA (18S rRNA) and at least 32 different proteins. The large 60S subunit contains 3 rRNA molecules (26S, 5.8S and 5S rRNA) and at least 42 different proteins.

The protein resides in the cytoplasm. Its function is as follows. Component of the ribosome, a large ribonucleoprotein complex responsible for the synthesis of proteins in the cell. The small ribosomal subunit (SSU) binds messenger RNAs (mRNAs) and translates the encoded message by selecting cognate aminoacyl-transfer RNA (tRNA) molecules. The large subunit (LSU) contains the ribosomal catalytic site termed the peptidyl transferase center (PTC), which catalyzes the formation of peptide bonds, thereby polymerizing the amino acids delivered by tRNAs into a polypeptide chain. The nascent polypeptides leave the ribosome through a tunnel in the LSU and interact with protein factors that function in enzymatic processing, targeting, and the membrane insertion of nascent chains at the exit of the ribosomal tunnel. The protein is Large ribosomal subunit protein eL24 (rpl-24) of Neurospora crassa (strain ATCC 24698 / 74-OR23-1A / CBS 708.71 / DSM 1257 / FGSC 987).